We begin with the raw amino-acid sequence, 1195 residues long: Phosphatidylinositol-3,5-bisphosphate 3-phosphatase MTMR4 (1195 aa).

Position 8 is a phosphoserine (Ser-8). Positions 153-570 (EHIRCRQEAE…RALHLWTAVY (418 aa)) constitute a Myotubularin phosphatase domain. Positions 320, 345, and 346 each coordinate a 1,2-diacyl-sn-glycero-3-phospho-(1D-myo-inositol-3,5-bisphosphate). A 1,2-diacyl-sn-glycero-3-phospho-(1D-myo-inositol-3-phosphate) is bound by residues Asn-320, Asn-345, and Ile-346. Cys-407 serves as the catalytic Phosphocysteine intermediate. A 1,2-diacyl-sn-glycero-3-phospho-(1D-myo-inositol-3,5-bisphosphate) contacts are provided by Ser-408, Asp-409, Gly-410, Trp-411, Asp-412, Arg-413, Lys-449, and Arg-453. Positions 408, 409, 410, 411, 412, and 413 each coordinate a 1,2-diacyl-sn-glycero-3-phospho-(1D-myo-inositol-3-phosphate). Arg-453 is an a 1,2-diacyl-sn-glycero-3-phospho-(1D-myo-inositol-3-phosphate) binding site. Phosphoserine is present on residues Ser-610 and Ser-629. Disordered stretches follow at residues 645 to 756 (EPWH…EHCP), 780 to 800 (ESSQ…SMLG), and 827 to 877 (DPST…LLEN). Over residues 720–729 (PEIKVLEETK) the composition is skewed to basic and acidic residues. Polar residues-rich tracts occupy residues 780–795 (ESSQ…QAQP) and 831–854 (DFLN…SSVP). A PY-motif; substrate motif for NEDD4 motif is present at residues 1004-1008 (VPPLY). Residues 1023 to 1055 (HRLRQIEAGYKQEVEQLRRQVRELQMRLDIRHC) are a coiled coil. Residues 1114-1174 (DHMASHCYNC…VCNSCYEHIQ (61 aa)) form an FYVE-type zinc finger. Zn(2+) contacts are provided by Cys-1120, Cys-1123, Cys-1136, Cys-1139, Cys-1144, Cys-1147, Cys-1166, and Cys-1169.

It belongs to the protein-tyrosine phosphatase family. Non-receptor class myotubularin subfamily. In terms of assembly, homooligomeric. Forms MTMR3:MTMR4 heterooligomers; regulates the localization of both proteins. The MTMR3:MTMR4 heterooligomer can also recruit both CEP55 and PLK1; occurs during early mitosis, regulates the phosphorylation of CEP55 by PLK1 and its recruitment to the midbody where it can mediate cell abscission. Interacts with SMAD2 and SMAD3; negatively regulates TGF-beta signaling through SMAD2 and SMAD3 dephosphorylation and retention in endosomes. Interacts with SMAD1; negatively regulates BMP signaling through SMAD1 dephosphorylation and retention in endosomes. Ubiquitinated. Ubiquitination by NEDD4 probably leads to proteasomal degradation. Post-translationally, phosphorylated by CDK1 during mitosis. As to expression, expressed in brain, heart, kidney, spleen, liver, colon, testis, muscle, placenta, thyroid gland, pancreas, ovary, prostate, skin, peripheral blood, and bone marrow.

Its subcellular location is the early endosome membrane. The protein localises to the recycling endosome membrane. The protein resides in the late endosome membrane. It localises to the cytoplasmic vesicle. It is found in the phagosome membrane. It carries out the reaction a 1,2-diacyl-sn-glycero-3-phospho-(1D-myo-inositol-3-phosphate) + H2O = a 1,2-diacyl-sn-glycero-3-phospho-(1D-myo-inositol) + phosphate. The catalysed reaction is a 1,2-diacyl-sn-glycero-3-phospho-(1D-myo-inositol-3,5-bisphosphate) + H2O = a 1,2-diacyl-sn-glycero-3-phospho-(1D-myo-inositol-5-phosphate) + phosphate. It catalyses the reaction 1,2-dioctanoyl-sn-glycero-3-phospho-(1-D-myo-inositol-3-phosphate) + H2O = 1,2-dioctanoyl-sn-glycero-3-phospho-(1D-myo-inositol) + phosphate. The enzyme catalyses 1,2-dioctanoyl-sn-glycero-3-phospho-(1D-myo-inositol-3,5-bisphosphate) + H2O = 1,2-dioctanoyl-sn-glycero-3-phospho-(1D-myo-inositol-5-phosphate) + phosphate. With respect to regulation, the phosphatidylinositol-3-phosphate phosphatase activity is inhibited by vanadate. Lipid phosphatase that specifically dephosphorylates the D-3 position of phosphatidylinositol 3-phosphate and phosphatidylinositol 3,5-bisphosphate, generating phosphatidylinositol and phosphatidylinositol 5-phosphate. Decreases the levels of phosphatidylinositol 3-phosphate, a phospholipid found in cell membranes where it acts as key regulator of both cell signaling and intracellular membrane traffic, in a subset of endosomal membranes to negatively regulate both endocytic recycling and trafficking and/or maturation of endosomes toward lysosomes. Through phosphatidylinositol 3-phosphate turnover in phagosome membranes regulates phagocytosis and phagosome maturation. By decreasing phosphatidylinositol 3-monophosphate (PI3P) levels in immune cells it can also regulate the innate immune response. Beside its lipid phosphatase activity, can also function as a molecular adapter to regulate midbody abscission during mitotic cytokinesis. Can also negatively regulate TGF-beta and BMP signaling through Smad proteins dephosphorylation and retention in endosomes. This chain is Phosphatidylinositol-3,5-bisphosphate 3-phosphatase MTMR4, found in Homo sapiens (Human).